Here is a 461-residue protein sequence, read N- to C-terminus: MAVSLWQQCIARLQDELSAQQFSMWIRPLQAEMEGDTLVIYAPNRFVLDWVRDKYLNIINQFFTEQMGADAPKLRFDIGSRPSAKPVVQATAAIRPKPAASKAVEKPTFNAPQAEPAITANHRSNINPTYQFDNFVEGKSNQLGKAAALQVSENPGGAYNPLFLYGGTGLGKTHLLHAVGNGIIKNKPDAKVVYMHSERFVQDMVKALQNNAIEEFKRYYRSVDALFIDDIQFFANKDRSQEEFFHTFNALLEGNHQIILTSDKYPKEIDGVEDRLKSRFGWGLTVAIEPPELETRVAILMRKAQESGINLPDEVAFFIAKRLRSNVRELEGALNRVIANANFTGRPITIDFVREALRDLLALQEKLVTIDNIQKTVAEYYKIKMADMLSKRRSRSVARPRQMAMALSKELTNQSLPEIGDAFGGRDHTTVLHACRKIAQLREESHDIKEDYANLIRTLSS.

Residues 1–87 (MAVSLWQQCI…IGSRPSAKPV (87 aa)) form a domain I, interacts with DnaA modulators region. The tract at residues 87 to 124 (VVQATAAIRPKPAASKAVEKPTFNAPQAEPAITANHRS) is domain II. The tract at residues 125 to 341 (NINPTYQFDN…GALNRVIANA (217 aa)) is domain III, AAA+ region. Residues G169, G171, K172, and T173 each coordinate ATP. The domain IV, binds dsDNA stretch occupies residues 342–461 (NFTGRPITID…YANLIRTLSS (120 aa)).

The protein belongs to the DnaA family. As to quaternary structure, oligomerizes as a right-handed, spiral filament on DNA at oriC.

Its subcellular location is the cytoplasm. In terms of biological role, plays an essential role in the initiation and regulation of chromosomal replication. ATP-DnaA binds to the origin of replication (oriC) to initiate formation of the DNA replication initiation complex once per cell cycle. Binds the DnaA box (a 9 base pair repeat at the origin) and separates the double-stranded (ds)DNA. Forms a right-handed helical filament on oriC DNA; dsDNA binds to the exterior of the filament while single-stranded (ss)DNA is stabiized in the filament's interior. The ATP-DnaA-oriC complex binds and stabilizes one strand of the AT-rich DNA unwinding element (DUE), permitting loading of DNA polymerase. After initiation quickly degrades to an ADP-DnaA complex that is not apt for DNA replication. Binds acidic phospholipids. The sequence is that of Chromosomal replication initiator protein DnaA from Shewanella piezotolerans (strain WP3 / JCM 13877).